Reading from the N-terminus, the 785-residue chain is MPKGRQKVPHLDAPLGLPTCLWLELAGLFLLVPWVMGLAGTGGPDGQGTGGPSWAVHLESLEGDGEEETLEQQADALAQAAGLVNAGRIGELQGHYLFVQPAGHRPALEVEAIRQQVEAVLAGHEAVRWHSEQRLLRRAKRSVHFNDPKYPQQWHLNNRRSPGRDINVTGVWERNVTGRGVTVVVVDDGVEHTIQDIAPNYSPEGSYDLNSNDPDPMPHPDVENGNHHGTRCAGEIAAVPNNSFCAVGVAYGSRIAGIRVLDGPLTDSMEAVAFNKHYQINDIYSCSWGPDDDGKTVDGPHQLGKAALQHGVIAGRQGFGSIFVVASGNGGQHNDNCNYDGYANSIYTVTIGAVDEEGRMPFYAEECASMLAVTFSGGDKMLRSIVTTDWDLQKGTGCTEGHTGTSAAAPLAAGMIALMLQVRPCLTWRDVQHIIVFTATRYEDRRAEWVTNEAGFSHSHQHGFGLLNAWRLVNAAKIWTSVPYLASYVSPVLKENKAIPQSPRSLEVLWNVSRMDLEMSGLKTLEHVAVTVSITHPRRGSLELKLFCPSGMMSLIGAPRSMDSDPNGFNDWTFSTVRCWGERARGTYRLVIRDVGDESFQVGILRQWQLTLYGSVWSAVDIRDRQRLLESAMSGKYLHDDFALPCPPGLKIPEEDGYTITPNTLKTLVLVGCFTVFWTVYYMLEVYLSQRNVASNQVCRSGPCHWPHRSRKAKEEGTELESVPLCSSKDPDEVETESRGPPTTSDLLAPDLLEQGDWSLSQNKSALDCPHQHLDVPHGKEEQIC.

The N-terminal stretch at 1 to 37 (MPKGRQKVPHLDAPLGLPTCLWLELAGLFLLVPWVMG) is a signal peptide. Positions 38 to 141 (LAGTGGPDGQ…EQRLLRRAKR (104 aa)) are excised as a propeptide. Residues 142 to 667 (SVHFNDPKYP…YTITPNTLKT (526 aa)) lie on the Extracellular side of the membrane. The Peptidase S8 domain occupies 153–473 (QWHLNNRRSP…FGLLNAWRLV (321 aa)). N-linked (GlcNAc...) asparagine glycosylation is found at asparagine 167 and asparagine 175. Catalysis depends on aspartate 187, which acts as the Charge relay system. Residues 197–219 (IAPNYSPEGSYDLNSNDPDPMPH) are disordered. The active-site Charge relay system is histidine 228. Asparagine 241 carries N-linked (GlcNAc...) asparagine glycosylation. Serine 406 (charge relay system) is an active-site residue. A P/Homo B domain is found at 481–618 (SVPYLASYVS…QLTLYGSVWS (138 aa)). Asparagine 511 carries N-linked (GlcNAc...) asparagine glycosylation. Residues 668–688 (LVLVGCFTVFWTVYYMLEVYL) form a helical membrane-spanning segment. At 689 to 785 (SQRNVASNQV…VPHGKEEQIC (97 aa)) the chain is on the cytoplasmic side. Residues 700-751 (RSGPCHWPHRSRKAKEEGTELESVPLCSSKDPDEVETESRGPPTTSDLLAPD) form a disordered region.

Belongs to the peptidase S8 family. Requires Ca(2+) as cofactor. Cysteine residues in the cytoplasmic tail are probably palmitoylated. In terms of processing, N-glycosylated. Expressed in spleen, thymus, prostate, testis, ovary, small intestine, colon and peripheral blood leukocyte.

It localises to the golgi apparatus. It is found in the trans-Golgi network membrane. Its activity is regulated as follows. Inhibited by zinc and copper. Functionally, serine endoprotease that processes various proproteins by cleavage at paired basic amino acids, recognizing the RXXX[KR]R consensus motif. Likely functions in the constitutive secretory pathway. This is Proprotein convertase subtilisin/kexin type 7 (PCSK7) from Homo sapiens (Human).